The sequence spans 76 residues: Sec-independent protein translocase protein TatA (76 aa).

Residues 1 to 21 form a helical membrane-spanning segment; the sequence is MGGISIWQLLIIVAIIVLLFG. The interval 43-76 is disordered; sequence MADDKSQPQDASFEKVEAKEAASTEQKAKEKEQA.

This sequence belongs to the TatA/E family. As to quaternary structure, the Tat system comprises two distinct complexes: a TatABC complex, containing multiple copies of TatA, TatB and TatC subunits, and a separate TatA complex, containing only TatA subunits. Substrates initially bind to the TatABC complex, which probably triggers association of the separate TatA complex to form the active translocon.

Its subcellular location is the cell inner membrane. Part of the twin-arginine translocation (Tat) system that transports large folded proteins containing a characteristic twin-arginine motif in their signal peptide across membranes. TatA could form the protein-conducting channel of the Tat system. This Actinobacillus pleuropneumoniae serotype 5b (strain L20) protein is Sec-independent protein translocase protein TatA.